The primary structure comprises 439 residues: MLTGVTDGIFCCLLGTPPNAVGPLESVESSDGYTFVEVKPGRVLRVKHAGPAPAAAPPPPSSASSDAAQGDLSGLVRCQRRITVYRNGRLLVENLGRAPRADLLHGQNGSGEPPAALEVELADPAGSDGRLAPGSAGSGSGSGSGGRRRRARRPKRTIHIDCEKRITSCKGAQADVVLFFIHGVGGSLAIWKEQLDFFVRLGYEVVAPDLAGHGASSAPQVAAAYTFYALAEDMRAIFKRYAKKRNVLIGHSYGVSFCTFLAHEYPDLVHKVIMINGGGPTALEPSFCSIFNMPTCVLHCLSPCLAWSFLKAGFARQGAKEKQLLKEGNAFNVSSFVLRAMMSGQYWPEGDEVYHAELTVPVLLVHGMHDKFVPVEEDQRMAEILLLAFLKLIDEGSHMVMLECPETVNTLLHEFLLWEPEPSPKALPEPLPAPPEDKK.

Disordered regions lie at residues 49-70 and 124-156; these read AGPAPAAAPPPPSSASSDAAQG and PAGSDGRLAPGSAGSGSGSGSGGRRRRARRPKR. Residues 136–145 are compositionally biased toward gly residues; that stretch reads AGSGSGSGSG. Over residues 146–156 the composition is skewed to basic residues; the sequence is GRRRRARRPKR. The AB hydrolase-1 domain maps to 177-279; the sequence is VLFFIHGVGG…HKVIMINGGG (103 aa). Residues S252, D370, and H398 each act as charge relay system in the active site.

It belongs to the AB hydrolase superfamily. In terms of assembly, interacts with NLRP3 (via NACHT and LLR domains); this interaction is enhanced in the presence of NLRP3 inflammasome inducers, such as ATP, nigericin, silica, or alum. Interacts with ZDHHC12. (Microbial infection) Interacts with SARS-CoV-2 nucleoprotein N; this interaction disrupts the NLRP3-ABHD8 association, enhancing NLRP3 stability, ultimately leading to increased inflammasome activation.

It is found in the cytoplasm. Negatively regulates NLRP3-driven inflammation. Promotes NLRP3 degradation through the chaperone-mediated autophagy (CMA) pathway, hence attenuating inflammasome activation and IL1B secretion. Acts by recruiting palmitoyltransferase ZDHHC12 to NLRP3, facilitating NLRP3 palmitoylation and subsequent degradation. The polypeptide is Protein ABHD8 (Homo sapiens (Human)).